Consider the following 98-residue polypeptide: Integration host factor subunit beta (98 aa).

It belongs to the bacterial histone-like protein family. Heterodimer of an alpha and a beta chain.

This protein is one of the two subunits of integration host factor, a specific DNA-binding protein that functions in genetic recombination as well as in transcriptional and translational control. This Pseudomonas putida (strain GB-1) protein is Integration host factor subunit beta.